The sequence spans 163 residues: Thiol peroxidase (163 aa).

In terms of domain architecture, Thioredoxin spans 16 to 162; it reads LQVGDKALDF…FEAAIAAAKA (147 aa). The active-site Cysteine sulfenic acid (-SOH) intermediate is Cys-58. Cys-58 and Cys-92 are joined by a disulfide.

The protein belongs to the peroxiredoxin family. Tpx subfamily. In terms of assembly, homodimer.

The enzyme catalyses a hydroperoxide + [thioredoxin]-dithiol = an alcohol + [thioredoxin]-disulfide + H2O. Thiol-specific peroxidase that catalyzes the reduction of hydrogen peroxide and organic hydroperoxides to water and alcohols, respectively. Plays a role in cell protection against oxidative stress by detoxifying peroxides. The chain is Thiol peroxidase from Streptococcus pneumoniae serotype 2 (strain D39 / NCTC 7466).